A 200-amino-acid polypeptide reads, in one-letter code: Sec-independent protein translocase protein TatB (200 aa).

A helical membrane pass occupies residues 2–22; that stretch reads LPDIGGTELLIIAAVALIVVG. Positions 160-200 are disordered; sequence KAPRKRASQKQEITVEAPKAVRAPRKRASKAGDSTASDIVS. Polar residues predominate over residues 191 to 200; it reads GDSTASDIVS.

Belongs to the TatB family. The Tat system comprises two distinct complexes: a TatABC complex, containing multiple copies of TatA, TatB and TatC subunits, and a separate TatA complex, containing only TatA subunits. Substrates initially bind to the TatABC complex, which probably triggers association of the separate TatA complex to form the active translocon.

It localises to the cell inner membrane. In terms of biological role, part of the twin-arginine translocation (Tat) system that transports large folded proteins containing a characteristic twin-arginine motif in their signal peptide across membranes. Together with TatC, TatB is part of a receptor directly interacting with Tat signal peptides. TatB may form an oligomeric binding site that transiently accommodates folded Tat precursor proteins before their translocation. In Caulobacter vibrioides (strain ATCC 19089 / CIP 103742 / CB 15) (Caulobacter crescentus), this protein is Sec-independent protein translocase protein TatB.